The chain runs to 133 residues: Basic phospholipase A2 beta-bungarotoxin A-AL2 chain (133 aa).

The signal sequence occupies residues 1-5; the sequence is FLLGA. Residues 6 to 13 constitute a propeptide that is removed on maturation; sequence ANIPPHPL. Intrachain disulfides connect C40/C132, C42/C58, C57/C113, C64/C106, C74/C99, and C92/C104. Ca(2+)-binding residues include Y41, G43, and G45. H61 is a catalytic residue. D62 contacts Ca(2+). D107 is a catalytic residue.

Belongs to the phospholipase A2 family. Group I subfamily. D49 sub-subfamily. As to quaternary structure, heterodimer; disulfide-linked. The A chains have phospholipase A2 activity and the B chains show homology with the basic protease inhibitors. The cofactor is Ca(2+). As to expression, expressed by the venom gland.

It localises to the secreted. It carries out the reaction a 1,2-diacyl-sn-glycero-3-phosphocholine + H2O = a 1-acyl-sn-glycero-3-phosphocholine + a fatty acid + H(+). Its function is as follows. Snake venom phospholipase A2 (PLA2) that inhibits neuromuscular transmission by blocking acetylcholine release from the nerve termini. PLA2 catalyzes the calcium-dependent hydrolysis of the 2-acyl groups in 3-sn-phosphoglycerides. The sequence is that of Basic phospholipase A2 beta-bungarotoxin A-AL2 chain from Bungarus multicinctus (Many-banded krait).